The chain runs to 472 residues: Putative F-box/LRR-repeat protein At5g54820 (472 aa).

Positions Q6–S54 constitute an F-box domain. LRR repeat units lie at residues N58–Q87, N135–G164, I183–N208, V225–G250, S283–P308, and M338–I363.

This chain is Putative F-box/LRR-repeat protein At5g54820, found in Arabidopsis thaliana (Mouse-ear cress).